The primary structure comprises 911 residues: Nitrate reductase [NADH] (911 aa).

Residues 1–10 are compositionally biased toward polar residues; it reads MAASVENRQY. The interval 1-71 is disordered; sequence MAASVENRQY…SEDEDDDDEK (71 aa). Positions 61–71 are enriched in acidic residues; it reads SSEDEDDDDEK. Cysteine 188 is a Mo-molybdopterin binding site. The Cytochrome b5 heme-binding domain maps to 536–611; it reads SKMYSMSEVR…LEDFRIGELI (76 aa). Heme-binding residues include histidine 571 and histidine 594. The region spanning 654-766 is the FAD-binding FR-type domain; sequence REKIPCKLVD…KGPLGHIEYQ (113 aa). FAD-binding positions include 706 to 709, 723 to 727, phenylalanine 728, phenylalanine 735, 740 to 742, and threonine 793; these read RAYT, VVKIY, and QMS.

Belongs to the nitrate reductase family. In terms of assembly, homodimer. It depends on FAD as a cofactor. The cofactor is heme. Mo-molybdopterin is required as a cofactor.

It carries out the reaction nitrite + NAD(+) + H2O = nitrate + NADH + H(+). Functionally, nitrate reductase is a key enzyme involved in the first step of nitrate assimilation in plants, fungi and bacteria. The polypeptide is Nitrate reductase [NADH] (NIA) (Solanum lycopersicum (Tomato)).